The sequence spans 557 residues: Dihydroxy-acid dehydratase (557 aa).

Aspartate 78 contributes to the Mg(2+) binding site. Cysteine 119 contacts [2Fe-2S] cluster. Residues aspartate 120 and lysine 121 each contribute to the Mg(2+) site. The residue at position 121 (lysine 121) is an N6-carboxylysine. Position 194 (cysteine 194) interacts with [2Fe-2S] cluster. Glutamate 446 is a Mg(2+) binding site. The active-site Proton acceptor is the serine 472.

The protein belongs to the IlvD/Edd family. As to quaternary structure, homodimer. [2Fe-2S] cluster serves as cofactor. Mg(2+) is required as a cofactor.

It catalyses the reaction (2R)-2,3-dihydroxy-3-methylbutanoate = 3-methyl-2-oxobutanoate + H2O. It carries out the reaction (2R,3R)-2,3-dihydroxy-3-methylpentanoate = (S)-3-methyl-2-oxopentanoate + H2O. The protein operates within amino-acid biosynthesis; L-isoleucine biosynthesis; L-isoleucine from 2-oxobutanoate: step 3/4. It functions in the pathway amino-acid biosynthesis; L-valine biosynthesis; L-valine from pyruvate: step 3/4. In terms of biological role, functions in the biosynthesis of branched-chain amino acids. Catalyzes the dehydration of (2R,3R)-2,3-dihydroxy-3-methylpentanoate (2,3-dihydroxy-3-methylvalerate) into 2-oxo-3-methylpentanoate (2-oxo-3-methylvalerate) and of (2R)-2,3-dihydroxy-3-methylbutanoate (2,3-dihydroxyisovalerate) into 2-oxo-3-methylbutanoate (2-oxoisovalerate), the penultimate precursor to L-isoleucine and L-valine, respectively. In Desulfosudis oleivorans (strain DSM 6200 / JCM 39069 / Hxd3) (Desulfococcus oleovorans), this protein is Dihydroxy-acid dehydratase.